Here is a 676-residue protein sequence, read N- to C-terminus: Translation initiation factor IF-2, mitochondrial (676 aa).

The 184-residue stretch at lysine 143–lysine 326 folds into the tr-type G domain. The interval glycine 152–threonine 159 is G1. Position 152–159 (glycine 152–threonine 159) interacts with GTP. The interval glycine 177–histidine 181 is G2. GTP contacts are provided by residues aspartate 200–glycine 203 and threonine 254–aspartate 257. Residues aspartate 200 to glycine 203 form a G3 region. A G4 region spans residues threonine 254–aspartate 257. Residues serine 296–lysine 298 are G5.

This sequence belongs to the TRAFAC class translation factor GTPase superfamily. Classic translation factor GTPase family. IF-2 subfamily.

The protein localises to the mitochondrion. Its function is as follows. One of the essential components for the initiation of protein synthesis. Protects formylmethionyl-tRNA from spontaneous hydrolysis and promotes its binding to the 30S ribosomal subunits. Also involved in the hydrolysis of GTP during the formation of the 70S ribosomal complex. This chain is Translation initiation factor IF-2, mitochondrial (IFM1), found in Saccharomyces cerevisiae (strain ATCC 204508 / S288c) (Baker's yeast).